The primary structure comprises 192 residues: uncharacterized protein (192 aa).

The 132-residue stretch at 29–160 (QRQAAVLIPV…PLDVYRRGNS (132 aa)) folds into the Nudix hydrolase domain. A Nudix box motif is present at residues 67–89 (GAVDSTDASLIAAALREAQEEVA). Mg(2+) contacts are provided by glutamate 83 and glutamate 87.

This sequence belongs to the Nudix hydrolase family. PCD1 subfamily. Mn(2+) is required as a cofactor. Requires Mg(2+) as cofactor.

In terms of biological role, probably mediates the hydrolysis of some nucleoside diphosphate derivatives. This is an uncharacterized protein from Salmonella choleraesuis (strain SC-B67).